Reading from the N-terminus, the 365-residue chain is GTPase Obg (365 aa).

Residues 2–160 (ESFVDEVAIE…KFLRLSLKLL (159 aa)) form the Obg domain. Positions 161–329 (ADVGIVGLPN…LLEAMDEAFF (169 aa)) constitute an OBG-type G domain. Residues 167-174 (GLPNAGKS), 192-196 (FTTLS), 215-218 (DIPG), 282-285 (NKID), and 310-312 (SAD) each bind GTP. Residues S174 and T194 each contribute to the Mg(2+) site.

This sequence belongs to the TRAFAC class OBG-HflX-like GTPase superfamily. OBG GTPase family. In terms of assembly, monomer. The cofactor is Mg(2+).

It localises to the cytoplasm. An essential GTPase which binds GTP, GDP and possibly (p)ppGpp with moderate affinity, with high nucleotide exchange rates and a fairly low GTP hydrolysis rate. Plays a role in control of the cell cycle, stress response, ribosome biogenesis and in those bacteria that undergo differentiation, in morphogenesis control. The polypeptide is GTPase Obg (Leptospira borgpetersenii serovar Hardjo-bovis (strain JB197)).